A 387-amino-acid polypeptide reads, in one-letter code: Xylose isomerase (387 aa).

Residues H53 and D56 contribute to the active site. 7 residues coordinate Mg(2+): E180, E216, H219, D244, D254, D256, and D286.

This sequence belongs to the xylose isomerase family. As to quaternary structure, homotetramer. Mg(2+) serves as cofactor.

It is found in the cytoplasm. The catalysed reaction is alpha-D-xylose = alpha-D-xylulofuranose. This is Xylose isomerase (xylA) from Thermus caldophilus.